A 360-amino-acid polypeptide reads, in one-letter code: Peptide chain release factor 1 (360 aa).

At Q235 the chain carries N5-methylglutamine. Over residues 285–295 (RQAAEQTDMRR) the composition is skewed to basic and acidic residues. Positions 285–309 (RQAAEQTDMRRNLLGSGDRSDKIRT) are disordered.

The protein belongs to the prokaryotic/mitochondrial release factor family. Methylated by PrmC. Methylation increases the termination efficiency of RF1.

Its subcellular location is the cytoplasm. Its function is as follows. Peptide chain release factor 1 directs the termination of translation in response to the peptide chain termination codons UAG and UAA. This chain is Peptide chain release factor 1, found in Haemophilus influenzae (strain 86-028NP).